We begin with the raw amino-acid sequence, 334 residues long: GTP 3',8-cyclase (334 aa).

The Radical SAM core domain maps to 11–236 (GFNRKIDYLR…ESTESSMGPA (226 aa)). Residue R20 coordinates GTP. C27 and C31 together coordinate [4Fe-4S] cluster. Y33 serves as a coordination point for S-adenosyl-L-methionine. C34 is a binding site for [4Fe-4S] cluster. R69 provides a ligand contact to GTP. G73 is a binding site for S-adenosyl-L-methionine. GTP is bound at residue T100. S124 lines the S-adenosyl-L-methionine pocket. Position 161 (K161) interacts with GTP. S-adenosyl-L-methionine is bound at residue M195. [4Fe-4S] cluster is bound by residues C260 and C263. GTP is bound at residue 265 to 267 (RVR). Residue C277 participates in [4Fe-4S] cluster binding.

This sequence belongs to the radical SAM superfamily. MoaA family. As to quaternary structure, monomer and homodimer. [4Fe-4S] cluster serves as cofactor.

The catalysed reaction is GTP + AH2 + S-adenosyl-L-methionine = (8S)-3',8-cyclo-7,8-dihydroguanosine 5'-triphosphate + 5'-deoxyadenosine + L-methionine + A + H(+). It functions in the pathway cofactor biosynthesis; molybdopterin biosynthesis. Functionally, catalyzes the cyclization of GTP to (8S)-3',8-cyclo-7,8-dihydroguanosine 5'-triphosphate. In Pseudomonas putida (strain ATCC 700007 / DSM 6899 / JCM 31910 / BCRC 17059 / LMG 24140 / F1), this protein is GTP 3',8-cyclase.